Reading from the N-terminus, the 561-residue chain is Proline--tRNA ligase (561 aa).

This sequence belongs to the class-II aminoacyl-tRNA synthetase family. ProS type 1 subfamily. As to quaternary structure, homodimer.

It is found in the cytoplasm. It carries out the reaction tRNA(Pro) + L-proline + ATP = L-prolyl-tRNA(Pro) + AMP + diphosphate. Catalyzes the attachment of proline to tRNA(Pro) in a two-step reaction: proline is first activated by ATP to form Pro-AMP and then transferred to the acceptor end of tRNA(Pro). As ProRS can inadvertently accommodate and process non-cognate amino acids such as alanine and cysteine, to avoid such errors it has two additional distinct editing activities against alanine. One activity is designated as 'pretransfer' editing and involves the tRNA(Pro)-independent hydrolysis of activated Ala-AMP. The other activity is designated 'posttransfer' editing and involves deacylation of mischarged Ala-tRNA(Pro). The misacylated Cys-tRNA(Pro) is not edited by ProRS. This is Proline--tRNA ligase from Wigglesworthia glossinidia brevipalpis.